The sequence spans 112 residues: Protein lin-52 homolog (112 aa).

This sequence belongs to the lin-52 family. In terms of assembly, component of the DREAM complex.

This is Protein lin-52 homolog (lin52) from Danio rerio (Zebrafish).